The primary structure comprises 717 residues: Ferric reduction oxidase 3, mitochondrial (717 aa).

Residues 1–23 constitute a mitochondrion transit peptide; it reads MAARGRLVVARGNRSFSSIIRKY. Helical transmembrane passes span 40–59, 86–104, 140–163, 232–255, 306–330, and 353–373; these read LLTM…MPTS, LLVY…SIYL, LGIV…WSLA, YHIW…CIYW, THYL…LISF, and LVSA…KNPM. Positions 198 to 317 constitute a Ferric oxidoreductase domain; the sequence is GLTGNICLGF…YLYMVFMLFF (120 aa). Heme contacts are provided by His-233, His-247, His-307, and His-320. Residues 346-451 enclose the FAD-binding FR-type domain; the sequence is QSRNNVKLVS…EGPYGPASTD (106 aa). 395–398 serves as a coordination point for FAD; the sequence is HPFT. 443 to 446 is an NAD(+) binding site; the sequence is GPYG. Transmembrane regions (helical) follow at residues 564-586 and 606-627; these read WLWL…AIIS and SLIY…AMLC.

Belongs to the ferric reductase (FRE) family. It depends on FAD as a cofactor. Expressed in root steele. Detected in shoots, leaves, stems, siliques, flowers and cotyledons.

It localises to the mitochondrion membrane. The catalysed reaction is 2 a Fe(II)-siderophore + NAD(+) + H(+) = 2 a Fe(III)-siderophore + NADH. In terms of biological role, ferric chelate reductase involved in iron reduction in roots. May participate in the transport of electrons to a Fe(3+) ion via FAD and heme intermediates. This chain is Ferric reduction oxidase 3, mitochondrial (FRO3), found in Arabidopsis thaliana (Mouse-ear cress).